The sequence spans 65 residues: Large ribosomal subunit protein bL35 (65 aa).

The disordered stretch occupies residues 1–52 (MPKIKTNRGAAKRFKRTGSGGFKCVQSHRRHILTKKSTKRKRQLRSPDMVHP). Basic residues predominate over residues 26–44 (QSHRRHILTKKSTKRKRQL).

The protein belongs to the bacterial ribosomal protein bL35 family.

The polypeptide is Large ribosomal subunit protein bL35 (Methylococcus capsulatus (strain ATCC 33009 / NCIMB 11132 / Bath)).